A 1296-amino-acid polypeptide reads, in one-letter code: Capping protein, Arp2/3 and myosin-I linker protein 2 (1296 aa).

LRR repeat units lie at residues 63-87, 88-110, 248-271, 273-296, 305-328, 363-386, 395-415, 426-448, 453-477, 480-506, 515-538, 542-565, 570-594, 598-621, and 836-859; these read DCTFSYLEVQAMALQETPPRVTFEL, ESLPELVLEFPCVAALEQLAQHV, ELVLEACGLRGDFVRRLAQALAGH, NSGLRELSLSGNLLDDRGMRALGR, DSTLTHLDLSGNPGALGPSQDSGG, CSSLTHLEASRNIFSRMKSQAAPA, TRMLRHLGLAGCKLPPEALRA, IHDLHLDLSACELRSVGAQVIQD, AGALSSLDLSDNGFGSDMVTLVLAI, SRSLKHVALGRNFNVRCKETLDDVLHR, DCPLQSLSVAESRLKQGASILIRA, NPKLTALDISGNAIGDAGAKMLAK, NTRLRSVIWDRNNTSALGLLDVAQA, NHSLKSMPLPLNDVTQAHRSRPEL, and TMAPAVPPLGGNELSPLETGGLEE. Positions 507–601 are tropomodulin-like; sequence IAQLMQDDDC…AQALEQNHSL (95 aa). A necessary for localization at the cell membrane region spans residues 975-1002; the sequence is ATPVPRTLRKKLGTLFAFKKPRSTRGPR. The tract at residues 988–1296 is disordered; it reads TLFAFKKPRS…TDQRGGGPNP (309 aa). Ser1008 carries the phosphoserine modification. 2 stretches are compositionally biased toward basic and acidic residues: residues 1079–1091 and 1118–1134; these read RPDKRRPLERGDT and ESKRKQSKDGEIKKAGS. Ser1134 is subject to Phosphoserine. Thr1145 carries the phosphothreonine modification. The segment covering 1176 to 1185 has biased composition (polar residues); that stretch reads TWKTLGQQLN. At Arg1191 the chain carries Omega-N-methylarginine. 2 stretches are compositionally biased toward pro residues: residues 1199-1209 and 1267-1285; these read PGPPSPCPSPS and PLPPYPTEPSSPERSPPSP. Ser1203 and Ser1281 each carry phosphoserine.

Belongs to the CARMIL family. In terms of assembly, forms homodimers. Interacts (via C-terminus) with heterodimeric capping protein (CP); the interaction inhibits CP activity and hence promotes actin polymerization at the barbed end of actin filaments.

The protein localises to the cytoplasm. Its subcellular location is the cytoskeleton. The protein resides in the cell membrane. It is found in the cell projection. It localises to the lamellipodium. The protein localises to the ruffle. Cell membrane-cytoskeleton-associated protein that plays a role in the regulation of actin polymerization at the barbed end of actin filaments. Prevents F-actin heterodimeric capping protein (CP) activity at the leading edges of migrating cells, and hence generates uncapped barbed ends and enhances actin polymerization. Plays a role in cell protrusion formations; involved in cell polarity, lamellipodial assembly, membrane ruffling and macropinosome formations. Involved as well in cell migration and invadopodia formation during wound healing. Required for CD28-mediated stimulation of NF-kappa-B signaling, involved in naive T cells activation, maturation into T memory cells, and differentiation into T helper cells. Required for CD28-mediated differentiation of T regulatory cells. The sequence is that of Capping protein, Arp2/3 and myosin-I linker protein 2 from Mus musculus (Mouse).